The primary structure comprises 465 residues: Trigger factor (465 aa).

Residues 160–235 enclose the PPIase FKBP-type domain; that stretch reads ADQVTIQELG…VVEVSSKKLQ (76 aa). The interval 412-465 is disordered; that stretch reads QLSGEGQSTEAASPKATGTEAAGTEQSEPAQTETAQNDAGQTETAQSEGEQQSE. The segment covering 435–465 has biased composition (polar residues); sequence TEQSEPAQTETAQNDAGQTETAQSEGEQQSE.

This sequence belongs to the FKBP-type PPIase family. Tig subfamily. Binds to the 50S ribosomal subunit via interactions with ribosomal protein L23. Also interacts with 23S rRNA and proteins L24 and L29 when complexed with the ribosome.

It is found in the cytoplasm. It catalyses the reaction [protein]-peptidylproline (omega=180) = [protein]-peptidylproline (omega=0). In terms of biological role, involved in protein export. Acts as a chaperone by maintaining the newly synthesized protein in an open conformation. Functions as a peptidyl-prolyl cis-trans isomerase. Probably changes conformation upon binding to the ribosome (maybe in particular due to interaction with L24), exposing a hydrophobic crevice that is probably important for its chaperone activity. The protein is Trigger factor (tig) of Deinococcus radiodurans (strain ATCC 13939 / DSM 20539 / JCM 16871 / CCUG 27074 / LMG 4051 / NBRC 15346 / NCIMB 9279 / VKM B-1422 / R1).